The sequence spans 465 residues: RuvB-like helicase 2 (465 aa).

72–79 (GPPSTGKT) is a binding site for ATP.

It belongs to the RuvB family. In terms of assembly, may form heterododecamers with RVB1. Component of the SWR1 chromatin remodeling complex, the INO80 chromatin remodeling complex, and of the R2TP complex. Interacts with dil1.

Its subcellular location is the nucleus. The catalysed reaction is ATP + H2O = ADP + phosphate + H(+). DNA helicase which participates in several chromatin remodeling complexes, including the SWR1 and the INO80 complexes. The SWR1 complex mediates the ATP-dependent exchange of histone H2A for the H2A variant HZT1 leading to transcriptional regulation of selected genes by chromatin remodeling. The INO80 complex remodels chromatin by shifting nucleosomes and is involved in DNA repair. Also involved in pre-rRNA processing. The sequence is that of RuvB-like helicase 2 (rvb2) from Schizosaccharomyces pombe (strain 972 / ATCC 24843) (Fission yeast).